The chain runs to 154 residues: SsrA-binding protein (154 aa).

It belongs to the SmpB family.

Its subcellular location is the cytoplasm. Required for rescue of stalled ribosomes mediated by trans-translation. Binds to transfer-messenger RNA (tmRNA), required for stable association of tmRNA with ribosomes. tmRNA and SmpB together mimic tRNA shape, replacing the anticodon stem-loop with SmpB. tmRNA is encoded by the ssrA gene; the 2 termini fold to resemble tRNA(Ala) and it encodes a 'tag peptide', a short internal open reading frame. During trans-translation Ala-aminoacylated tmRNA acts like a tRNA, entering the A-site of stalled ribosomes, displacing the stalled mRNA. The ribosome then switches to translate the ORF on the tmRNA; the nascent peptide is terminated with the 'tag peptide' encoded by the tmRNA and targeted for degradation. The ribosome is freed to recommence translation, which seems to be the essential function of trans-translation. The chain is SsrA-binding protein from Treponema denticola (strain ATCC 35405 / DSM 14222 / CIP 103919 / JCM 8153 / KCTC 15104).